The primary structure comprises 433 residues: Trigger factor (433 aa).

A PPIase FKBP-type domain is found at 161-246 (NDRVIIDFVG…LNKVENMILP (86 aa)).

It belongs to the FKBP-type PPIase family. Tig subfamily.

It localises to the cytoplasm. The enzyme catalyses [protein]-peptidylproline (omega=180) = [protein]-peptidylproline (omega=0). Functionally, involved in protein export. Acts as a chaperone by maintaining the newly synthesized protein in an open conformation. Functions as a peptidyl-prolyl cis-trans isomerase. This chain is Trigger factor, found in Haemophilus ducreyi (strain 35000HP / ATCC 700724).